A 447-amino-acid chain; its full sequence is MAPDPVPTPGPASAQLRQTRYFTWEEVAQRSGREKERWLVIDRKVYNISDFSRRHPGGSRVISHYAGQDATDPFVAFHINKGLVRKYMNSLLIGELAPEQPSFEPTKNKALTDEFRELRATVERMGLMKANHLFFLVYLLHILLLDVAAWLTLWIFGTSLVPFILCAVLLSTVQAQAGWLQHDFGHLSVFGTSTWNHLLHHFVIGHLKGAPASWWNHMHFQHHAKPNCFRKDPDINMHPLFFALGKVLPVELGREKKKHMPYNHQHKYFFLIGPPALLPLYFQWYIFYFVVQRKKWVDLAWMLSFYARIFFTYMPLLGLKGFLGLFFIVRFLESNWFVWVTQMNHIPMHIDHDRNVDWVSTQLQATCNVHQSAFNNWFSGHLNFQIEHHLFPTMPRHNYHKVAPLVQSLCAKYGIKYESKPLLTAFADIVYSLKESGQLWLDAYLHQ.

Met-1 is modified (N-acetylmethionine). Residues 1 to 124 (MAPDPVPTPG…FRELRATVER (124 aa)) are Cytoplasmic-facing. A Cytochrome b5 heme-binding domain is found at 19-97 (TRYFTWEEVA…MNSLLIGELA (79 aa)). The helical transmembrane segment at 125–145 (MGLMKANHLFFLVYLLHILLL) threads the bilayer. Residues 146–160 (DVAAWLTLWIFGTSL) lie on the Lumenal side of the membrane. The chain crosses the membrane as a helical span at residues 161 to 180 (VPFILCAVLLSTVQAQAGWL). Residues 181–268 (QHDFGHLSVF…HMPYNHQHKY (88 aa)) lie on the Cytoplasmic side of the membrane. The short motif at 182 to 186 (HDFGH) is the Histidine box-1 element. A Histidine box-2 motif is present at residues 219–223 (HFQHH). The chain crosses the membrane as a helical span at residues 269 to 289 (FFLIGPPALLPLYFQWYIFYF). Topologically, residues 290-308 (VVQRKKWVDLAWMLSFYAR) are lumenal. A helical membrane pass occupies residues 309 to 329 (IFFTYMPLLGLKGFLGLFFIV). The Cytoplasmic portion of the chain corresponds to 330-447 (RFLESNWFVW…QLWLDAYLHQ (118 aa)). The Histidine box-3 signature appears at 385 to 389 (QIEHH).

The protein belongs to the fatty acid desaturase type 1 family. In terms of tissue distribution, highly expressed in the adrenal gland, liver, brain, and testis, tissues where lipogenesis and steroidogenesis are active. Expressed in colonic mucosa.

Its subcellular location is the endoplasmic reticulum membrane. It localises to the mitochondrion. The enzyme catalyses (8Z,11Z,14Z)-eicosatrienoyl-CoA + 2 Fe(II)-[cytochrome b5] + O2 + 2 H(+) = (5Z,8Z,11Z,14Z)-eicosatetraenoyl-CoA + 2 Fe(III)-[cytochrome b5] + 2 H2O. The catalysed reaction is (8Z,11Z,14Z,17Z)-eicosatetraenoyl-CoA + 2 Fe(II)-[cytochrome b5] + O2 + 2 H(+) = (5Z,8Z,11Z,14Z,17Z)-eicosapentaenoyl-CoA + 2 Fe(III)-[cytochrome b5] + 2 H2O. It carries out the reaction (11E)-octadecenoyl-CoA + 2 Fe(II)-[cytochrome b5] + O2 + 2 H(+) = (5Z,11E)-octadecadienoyl-CoA + 2 Fe(III)-[cytochrome b5] + 2 H2O. It functions in the pathway lipid metabolism; polyunsaturated fatty acid biosynthesis. Acts as a front-end fatty acyl-coenzyme A (CoA) desaturase that introduces a cis double bond at carbon 5 located between a preexisting double bond and the carboxyl end of the fatty acyl chain. Involved in biosynthesis of highly unsaturated fatty acids (HUFA) from the essential polyunsaturated fatty acids (PUFA) linoleic acid (LA) (18:2n-6) and alpha-linolenic acid (ALA) (18:3n-3) precursors. Specifically, desaturates dihomo-gamma-linoleoate (DGLA) (20:3n-6) and eicosatetraenoate (ETA) (20:4n-3) to generate arachidonate (AA) (20:4n-6) and eicosapentaenoate (EPA) (20:5n-3), respectively. As a rate limiting enzyme for DGLA (20:3n-6) and AA (20:4n-6)-derived eicosanoid biosynthesis, controls the metabolism of inflammatory lipids like prostaglandin E2, critical for efficient acute inflammatory response and maintenance of epithelium homeostasis. Contributes to membrane phospholipid biosynthesis by providing AA (20:4n-6) as a major acyl chain esterified into phospholipids. In particular, regulates phosphatidylinositol-4,5-bisphosphate levels, modulating inflammatory cytokine production in T-cells. Also desaturates (11E)-octadecenoate (trans-vaccenoate)(18:1n-9), a metabolite in the biohydrogenation pathway of LA (18:2n-6). The polypeptide is Acyl-CoA (8-3)-desaturase (Mus musculus (Mouse)).